The following is a 123-amino-acid chain: Small ribosomal subunit protein uS12 (123 aa).

D89 carries the 3-methylthioaspartic acid modification.

This sequence belongs to the universal ribosomal protein uS12 family. Part of the 30S ribosomal subunit. Contacts proteins S8 and S17. May interact with IF1 in the 30S initiation complex.

Its function is as follows. With S4 and S5 plays an important role in translational accuracy. Functionally, interacts with and stabilizes bases of the 16S rRNA that are involved in tRNA selection in the A site and with the mRNA backbone. Located at the interface of the 30S and 50S subunits, it traverses the body of the 30S subunit contacting proteins on the other side and probably holding the rRNA structure together. The combined cluster of proteins S8, S12 and S17 appears to hold together the shoulder and platform of the 30S subunit. This is Small ribosomal subunit protein uS12 from Pelagibacter ubique (strain HTCC1062).